Here is a 225-residue protein sequence, read N- to C-terminus: Ras-related protein Rab-32 (225 aa).

Alanine 2 carries the N-acetylalanine modification. Positions 36, 37, 38, 39, 40, 51, 52, 54, and 57 each coordinate GTP. Threonine 39 is a binding site for Mg(2+). The Switch 1 signature appears at 48–62 (QLFSQHYRATIGVDF). Mg(2+) is bound at residue threonine 57. A Phosphoserine modification is found at serine 71. Aspartate 81 is a Mg(2+) binding site. Glycine 84, asparagine 143, lysine 144, aspartate 146, alanine 175, and lysine 176 together coordinate GTP. Positions 84–97 (GQERFGNMTRVYYK) match the Switch 2 motif. The tract at residues 178–197 (NINIEEAARFLVEKILVNHQ) is PKA-RII subunit binding domain. 2 S-geranylgeranyl cysteine lipidation sites follow: cysteine 224 and cysteine 225.

Belongs to the small GTPase superfamily. Rab family. As to quaternary structure, interacts with ANKRD27. A decreased interaction with ANKRD27 seen in the presence of SGSM2. Interacts with LRRK2 (via N-terminus); this interaction results in stimulation of RAB10 phosphorylation by LRRK2. The cofactor is Mg(2+). In terms of tissue distribution, widely expressed with high levels in heart, liver, kidney, bone marrow, testis, colon and fetal lung.

Its subcellular location is the mitochondrion. It is found in the mitochondrion outer membrane. It localises to the cytoplasmic vesicle. The protein localises to the phagosome. The protein resides in the phagosome membrane. Its subcellular location is the melanosome. It is found in the melanosome membrane. It catalyses the reaction GTP + H2O = GDP + phosphate + H(+). With respect to regulation, regulated by guanine the nucleotide exchange factor (GEF) BLOC-3 complex composed of HPS1 and HPS4 which promote the exchange of bound GDP for free GTP. Regulated by the GTPase activating protein (GAP) SGSM2/RUTBC1 which increases the GTP hydrolysis activity. Inhibited by GDP dissociation inhibitors (GDIs) which prevent Rab-GDP dissociation. Functionally, the small GTPases Rab are key regulators of intracellular membrane trafficking, from the formation of transport vesicles to their fusion with membranes. Rabs cycle between an inactive GDP-bound form and an active GTP-bound form that is able to recruit to membranes different set of downstream effectors directly responsible for vesicle formation, movement, tethering and fusion. Also acts as an A-kinase anchoring protein by binding to the type II regulatory subunit of protein kinase A and anchoring it to the mitochondrion. Also involved in synchronization of mitochondrial fission. Plays a role in the maturation of phagosomes that engulf pathogens, such as S.aureus and M.tuberculosis. Plays an important role in the control of melanin production and melanosome biogenesis. In concert with RAB38, regulates the proper trafficking of melanogenic enzymes TYR, TYRP1 and DCT/TYRP2 to melanosomes in melanocytes. Stimulates phosphorylation of RAB10 'Thr-73' by LRRK2. The sequence is that of Ras-related protein Rab-32 from Homo sapiens (Human).